A 334-amino-acid polypeptide reads, in one-letter code: Putative carboxypeptidase VC_A0337 (334 aa).

Serine 112 (nucleophile) is an active-site residue. Active-site charge relay system residues include glutamate 234 and histidine 302.

This sequence belongs to the peptidase S66 family.

The protein is Putative carboxypeptidase VC_A0337 of Vibrio cholerae serotype O1 (strain ATCC 39315 / El Tor Inaba N16961).